Reading from the N-terminus, the 813-residue chain is MHSCSERRMMTVIWSLCLIFCLSNSILAIAKDLCLPDQRDALLEFKNEFYVQEFDPHMKCEKATETWRNKTDCCSWNRVSCDPKTGKVVELDLMSSCLNGPLRSNSSLFRLQHLQSLELSSNNISGILPDSIGNLKYLRSLSFRTCHLFGKIPSSLGSLSYLTHLDLSYNDFTSEGPDSGGNLNRLTDLQLVLLNLSSVTWIDLGSNQLKGMLPSNMSSLSKLVSFDISENSFSGSIPSSLFMIPSLNFSGPLEIGNISSHSELGYLYMGENNFNGPIPGSLSKLVGLRDLSLSFWNTGRGIVDFSIFLHLKSLCSLDLSYLNTRSMVDLSFFSHLMSLDELDLSGINLKISSTLSFPSATGTLILASCNIVEFPKFLENQTSLFYLDISANHIEGQVPEWLWRLPTLSFVNIAQNSFSGELPMLPNSIYSFIASDNQFSGEIPRTVCELVSLNTLVLSNNKFSGSIPRCFENFKTISILHLRNNSLSGVFPKEIISETLTSLDVGHNWLSGQLPKSLIKCTDLEFLNVEDNRINDKFPFWLRSLSNLQILVLRSNEFYGPIFSLEDSLSFPKLRIFDISENHFTGVLPSDYFAGWSAMSSVVDIFDTTPQVHILGVFQGYYHNSVVLTNKGLNMELVGSGFTIYKTIDVSGNRLEGDIPESIGILKELIVLNMSNNAFTGHIPPSLSNLSNLQSLDLSQNRLSGSIPPELGKLTFLEWMNFSYNRLEGPIPQATQIQSQNSSSFAENPGLCGAPFLNKCGGEEEEEEEATKQEEDEDEEKEEKNQVFSWIAAAIGYVPGVFCGLTIAHILTS.

Residues methionine 1–alanine 30 form the signal peptide. Residues lysine 31–glutamine 786 are Extracellular-facing. N-linked (GlcNAc...) asparagine glycosylation is found at asparagine 69, asparagine 105, and asparagine 123. LRR repeat units follow at residues leucine 111–asparagine 134, lysine 136–leucine 159, and serine 160–asparagine 182. Asparagine 195 and asparagine 216 each carry an N-linked (GlcNAc...) asparagine glycan. LRR repeat units follow at residues leucine 196–serine 219, leucine 220–isoleucine 244, proline 245–serine 260, histidine 261–leucine 285, leucine 288–histidine 310, leucine 311–histidine 335, leucine 336–serine 359, threonine 361–glutamine 381, threonine 382–leucine 405, proline 406–phenylalanine 432, alanine 434–leucine 450, valine 451–asparagine 473, lysine 475–glutamate 498, leucine 500–cysteine 521, aspartate 523–serine 544, leucine 545–phenylalanine 571, proline 572–glycine 595, phenylalanine 642–leucine 666, lysine 667–leucine 690, serine 691–leucine 714, and phenylalanine 716–serine 739. N-linked (GlcNAc...) asparagine glycosylation is found at asparagine 248 and asparagine 257. Asparagine 380 carries N-linked (GlcNAc...) asparagine glycosylation. An N-linked (GlcNAc...) asparagine glycan is attached at asparagine 484. Residues asparagine 673 and asparagine 689 are each glycosylated (N-linked (GlcNAc...) asparagine). Residues asparagine 721 and asparagine 741 are each glycosylated (N-linked (GlcNAc...) asparagine). The disordered stretch occupies residues phenylalanine 756–asparagine 785. Residues glutamate 763–lysine 781 show a composition bias toward acidic residues. A helical membrane pass occupies residues valine 787–isoleucine 807. The Cytoplasmic portion of the chain corresponds to alanine 808 to serine 813.

This sequence belongs to the RLP family.

The protein localises to the cell membrane. Functionally, plays a role in root hair development. The polypeptide is Receptor-like protein 48 (Arabidopsis thaliana (Mouse-ear cress)).